Here is a 467-residue protein sequence, read N- to C-terminus: 3-isopropylmalate dehydratase large subunit (467 aa).

The [4Fe-4S] cluster site is built by Cys-347, Cys-408, and Cys-411.

Belongs to the aconitase/IPM isomerase family. LeuC type 1 subfamily. In terms of assembly, heterodimer of LeuC and LeuD. It depends on [4Fe-4S] cluster as a cofactor.

The catalysed reaction is (2R,3S)-3-isopropylmalate = (2S)-2-isopropylmalate. It functions in the pathway amino-acid biosynthesis; L-leucine biosynthesis; L-leucine from 3-methyl-2-oxobutanoate: step 2/4. In terms of biological role, catalyzes the isomerization between 2-isopropylmalate and 3-isopropylmalate, via the formation of 2-isopropylmaleate. This Bordetella pertussis (strain Tohama I / ATCC BAA-589 / NCTC 13251) protein is 3-isopropylmalate dehydratase large subunit.